A 681-amino-acid polypeptide reads, in one-letter code: DNA-directed RNA polymerase subunit beta' (681 aa).

Zn(2+) is bound by residues Cys69, Cys71, Cys87, and Cys90. Positions 489, 491, and 493 each coordinate Mg(2+).

Belongs to the RNA polymerase beta' chain family. RpoC1 subfamily. In plastids the minimal PEP RNA polymerase catalytic core is composed of four subunits: alpha, beta, beta', and beta''. When a (nuclear-encoded) sigma factor is associated with the core the holoenzyme is formed, which can initiate transcription. Mg(2+) is required as a cofactor. Zn(2+) serves as cofactor.

It localises to the plastid. It is found in the chloroplast. The catalysed reaction is RNA(n) + a ribonucleoside 5'-triphosphate = RNA(n+1) + diphosphate. In terms of biological role, DNA-dependent RNA polymerase catalyzes the transcription of DNA into RNA using the four ribonucleoside triphosphates as substrates. This Nicotiana tomentosiformis (Tobacco) protein is DNA-directed RNA polymerase subunit beta'.